The sequence spans 901 residues: Protein translocase subunit SecA (901 aa).

Residues Gln-87, 105 to 109, and Asp-512 contribute to the ATP site; that span reads GEGKT. Positions 885, 887, 896, and 897 each coordinate Zn(2+).

This sequence belongs to the SecA family. As to quaternary structure, monomer and homodimer. Part of the essential Sec protein translocation apparatus which comprises SecA, SecYEG and auxiliary proteins SecDF-YajC and YidC. Requires Zn(2+) as cofactor.

The protein resides in the cell inner membrane. It is found in the cytoplasm. The enzyme catalyses ATP + H2O + cellular proteinSide 1 = ADP + phosphate + cellular proteinSide 2.. Its function is as follows. Part of the Sec protein translocase complex. Interacts with the SecYEG preprotein conducting channel. Has a central role in coupling the hydrolysis of ATP to the transfer of proteins into and across the cell membrane, serving both as a receptor for the preprotein-SecB complex and as an ATP-driven molecular motor driving the stepwise translocation of polypeptide chains across the membrane. This Salmonella paratyphi B (strain ATCC BAA-1250 / SPB7) protein is Protein translocase subunit SecA.